A 183-amino-acid chain; its full sequence is Gamma-crystallin N (183 aa).

Beta/gamma crystallin 'Greek key' domains follow at residues 6–46 (GKIT…RVES), 47–89 (GAWV…RPVG), 95–136 (FRID…KVYG), and 138–180 (GAWV…RRVL).

This sequence belongs to the beta/gamma-crystallin family. As to quaternary structure, monomer. In terms of tissue distribution, primordially eye-specific. Present in lens nucleus. In the retina, expression in observed in the outer plexiform layer (containing photoreceptors axons and synapses) and photoreceptor outer segments (at protein level). Also detected in the auditory hindbrain where it is highly expressed in the medial nucleus of the trapezoid body, but also present in other nuclei of the superior olivary complex.

Its function is as follows. Crystallins are the dominant structural components of the vertebrate eye lens. Also plays an important role for integrity and function of auditory nuclei. This Mus musculus (Mouse) protein is Gamma-crystallin N.